The sequence spans 152 residues: 3-dehydroquinate dehydratase (152 aa).

Residue Tyr23 is the Proton acceptor of the active site. Positions 75, 81, and 88 each coordinate substrate. Catalysis depends on His101, which acts as the Proton donor. Residues 102–103 (IS) and Arg112 each bind substrate.

Belongs to the type-II 3-dehydroquinase family. Homododecamer.

It carries out the reaction 3-dehydroquinate = 3-dehydroshikimate + H2O. The protein operates within metabolic intermediate biosynthesis; chorismate biosynthesis; chorismate from D-erythrose 4-phosphate and phosphoenolpyruvate: step 3/7. Functionally, catalyzes a trans-dehydration via an enolate intermediate. This chain is 3-dehydroquinate dehydratase, found in Alkalilimnicola ehrlichii (strain ATCC BAA-1101 / DSM 17681 / MLHE-1).